The primary structure comprises 246 residues: Probable transcriptional regulatory protein YebC (246 aa).

Positions methionine 1–lysine 20 are disordered.

It belongs to the TACO1 family.

The protein localises to the cytoplasm. The chain is Probable transcriptional regulatory protein YebC from Shigella dysenteriae serotype 1 (strain Sd197).